The following is a 147-amino-acid chain: Large ribosomal subunit protein uL15 (147 aa).

Residues 1–15 (MKLHELKPAKGAVKE) are compositionally biased toward basic and acidic residues. The interval 1–47 (MKLHELKPAKGAVKEVKRKGRGRATGNGKTAGRGHNGQNSRSGGGVR) is disordered. A compositionally biased stretch (gly residues) spans 23–35 (RATGNGKTAGRGH).

It belongs to the universal ribosomal protein uL15 family. As to quaternary structure, part of the 50S ribosomal subunit.

Binds to the 23S rRNA. In Alkaliphilus metalliredigens (strain QYMF), this protein is Large ribosomal subunit protein uL15.